Reading from the N-terminus, the 227-residue chain is AN1-type zinc finger protein 3 (227 aa).

The A20-type zinc-finger motif lies at P12–P44. The Zn(2+) site is built by C18, C20, C32, and C35. Disordered regions lie at residues K41–C99 and P113–Q151. 2 stretches are compositionally biased toward low complexity: residues T49–L59 and S66–T77. 2 stretches are compositionally biased toward polar residues: residues L78 to T96 and P113 to E127. Basic and acidic residues predominate over residues R135–R148. The segment at Q151 to G200 adopts an AN1-type zinc-finger fold. Zn(2+)-binding residues include C157, C160, C174, C176, C181, H184, H190, and C192.

As to expression, expressed in testis.

This is AN1-type zinc finger protein 3 (Zfand3) from Mus musculus (Mouse).